A 382-amino-acid chain; its full sequence is Galactokinase (382 aa).

34-37 (EHTD) serves as a coordination point for substrate. ATP is bound at residue 124–130 (GAGLSSS). Mg(2+) contacts are provided by Ser130 and Glu162. The active-site Proton acceptor is the Asp174. A substrate-binding site is contributed by Tyr223.

Belongs to the GHMP kinase family. GalK subfamily.

The protein resides in the cytoplasm. It carries out the reaction alpha-D-galactose + ATP = alpha-D-galactose 1-phosphate + ADP + H(+). The protein operates within carbohydrate metabolism; galactose metabolism. In terms of biological role, catalyzes the transfer of the gamma-phosphate of ATP to D-galactose to form alpha-D-galactose-1-phosphate (Gal-1-P). This Shigella dysenteriae serotype 1 (strain Sd197) protein is Galactokinase.